The sequence spans 517 residues: Synaptic vesicular amine transporter (517 aa).

The Cytoplasmic portion of the chain corresponds to 1–20; that stretch reads MALSELALLRRLQESRHSRK. Residues 21 to 41 form a helical membrane-spanning segment; it reads LILFIVFLALLLDNMLLTVVV. Over 42 to 132 the chain is Extracellular; sequence PIIPSYLYSI…EDKDLLNENV (91 aa). N-linked (GlcNAc...) asparagine glycosylation is found at Asn84, Asn91, and Asn112. Cys120 and Cys327 are disulfide-bonded. Residues 133–153 form a helical membrane-spanning segment; that stretch reads QVGLLFASKATVQLLTNPFIG. At 154–162 the chain is on the cytoplasmic side; it reads LLTNRIGYP. A helical transmembrane segment spans residues 163 to 183; the sequence is IPMFTGFCIMFISTVMFAFSR. Residues 184-192 are Extracellular-facing; sequence TYAFLLIAR. Residues 193-213 traverse the membrane as a helical segment; the sequence is SLQGIGSSCSSVAGMGMLASV. Residues 214-222 are Cytoplasmic-facing; that stretch reads YTDDEERGN. Residues 223–245 form a helical membrane-spanning segment; the sequence is AMGIALGGLAMGVLVGPPFGSVL. Residues Leu231 and Val235 each contribute to the serotonin site. At 246 to 251 the chain is on the extracellular side; the sequence is YEFVGK. A helical transmembrane segment spans residues 252-274; sequence TAPFLVLAALVLLDGAIQLFVLQ. Over 275–294 the chain is Cytoplasmic; sequence PSRVQPESQKGTPLTTLLRD. The chain crosses the membrane as a helical span at residues 295–314; the sequence is PYILIAAGSICFANMGIAML. Serotonin is bound by residues Asn308, Ile311, Glu315, Phe337, and Tyr344. At 315-331 the chain is on the extracellular side; it reads EPALPIWMMETMCSHKW. A helical transmembrane segment spans residues 332–355; sequence QLGVAFLPASVSYLIGTNVFGILA. Over 356-360 the chain is Cytoplasmic; it reads HKMGR. Residues 361-381 traverse the membrane as a helical segment; the sequence is WLCALLGMIIVGMSILCIPLA. Residues 382 to 392 are Extracellular-facing; sequence KNIYGLIAPNF. The helical transmembrane segment at 393 to 413 threads the bilayer; sequence GVGFAIGMVDSSMMPIMGYLV. Position 402 (Asp402) interacts with serotonin. At 414-417 the chain is on the cytoplasmic side; sequence DLRH. A helical membrane pass occupies residues 418 to 438; sequence VSVYGSVYAIADVAFCMGYAI. Tyr436 lines the serotonin pocket. Topologically, residues 439 to 443 are extracellular; it reads GPSAG. A helical transmembrane segment spans residues 444–465; it reads GAIAKAIGFPWLMTIIGIIDIL. Residues 466–517 lie on the Cytoplasmic side of the membrane; that stretch reads FAPLCFFLRSPPAKEEKMAILMDHNCPIKTKMYTQNSSQSHPIGEDEESESD. Phosphoserine; by CK2 is present on residues Ser514 and Ser516.

This sequence belongs to the major facilitator superfamily. Vesicular transporter family. As to quaternary structure, interacts with SLC6A3.

It is found in the cytoplasmic vesicle. The protein localises to the secretory vesicle. It localises to the synaptic vesicle membrane. Its subcellular location is the secretory vesicle membrane. The protein resides in the cell projection. It is found in the axon. The protein localises to the dendrite. The enzyme catalyses serotonin(in) + 2 H(+)(out) = serotonin(out) + 2 H(+)(in). The catalysed reaction is dopamine(in) + 2 H(+)(out) = dopamine(out) + 2 H(+)(in). It catalyses the reaction histamine(in) + 2 H(+)(out) = histamine(out) + 2 H(+)(in). Strongly inhibited by reserpine and tetrabenazine. Also inhibited to a lesser extent by ketanserin and fenfluramine. Reserpine and ketanserin inhibit by blocking the substrate-binding pocket. Tetrabenazine traps SLC18A2/VMAT2 in an occluded conformation and its inhibition is specific to SLC18A2/VMAT2 but not SLC18A1/VMAT1. Electrogenic antiporter that exchanges one cationic monoamine with two intravesicular protons across the membrane of secretory and synaptic vesicles. Uses the electrochemical proton gradient established by the V-type proton-pump ATPase to accumulate high concentrations of monoamines inside the vesicles prior to their release via exocytosis. Transports a variety of catecholamines such as dopamine, adrenaline and noradrenaline, histamine, and indolamines such as serotonin. Regulates the transvesicular monoaminergic gradient that determines the quantal size. Mediates somatodendritic dopamine release in hippocampal neurons, likely as part of a regulated secretory pathway that integrates retrograde synaptic signals. Acts as a primary transporter for striatal dopamine loading ensuring impulse-dependent release of dopamine at the synaptic cleft. Responsible for histamine and serotonin storage and subsequent corelease from mast cell granules. The protein is Synaptic vesicular amine transporter (SLC18A2) of Bos taurus (Bovine).